Here is a 479-residue protein sequence, read N- to C-terminus: UDP-N-acetylmuramoyl-L-alanyl-D-glutamate--2,6-diaminopimelate ligase (479 aa).

UDP-N-acetyl-alpha-D-muramoyl-L-alanyl-D-glutamate is bound at residue Ser-21. ATP is bound at residue 98 to 104; the sequence is GTNGKSS. UDP-N-acetyl-alpha-D-muramoyl-L-alanyl-D-glutamate contacts are provided by residues 144 to 145, Ser-171, Gln-177, and Arg-179; that span reads TT. Position 211 is an N6-carboxylysine (Lys-211). Meso-2,6-diaminopimelate-binding positions include Arg-372, 396-399, Gly-446, and Glu-450; that span reads DNPR. A Meso-diaminopimelate recognition motif motif is present at residues 396-399; the sequence is DNPR.

The protein belongs to the MurCDEF family. MurE subfamily. Mg(2+) serves as cofactor. Post-translationally, carboxylation is probably crucial for Mg(2+) binding and, consequently, for the gamma-phosphate positioning of ATP.

It localises to the cytoplasm. It carries out the reaction UDP-N-acetyl-alpha-D-muramoyl-L-alanyl-D-glutamate + meso-2,6-diaminopimelate + ATP = UDP-N-acetyl-alpha-D-muramoyl-L-alanyl-gamma-D-glutamyl-meso-2,6-diaminopimelate + ADP + phosphate + H(+). It functions in the pathway cell wall biogenesis; peptidoglycan biosynthesis. In terms of biological role, catalyzes the addition of meso-diaminopimelic acid to the nucleotide precursor UDP-N-acetylmuramoyl-L-alanyl-D-glutamate (UMAG) in the biosynthesis of bacterial cell-wall peptidoglycan. The chain is UDP-N-acetylmuramoyl-L-alanyl-D-glutamate--2,6-diaminopimelate ligase from Rickettsia rickettsii.